Consider the following 314-residue polypeptide: Melanoma-associated antigen 6 (314 aa).

Residues 1-20 (MPLEQRSQHCKPEEGLEARG) show a composition bias toward basic and acidic residues. The segment at 1–99 (MPLEQRSQHC…QEEEGPSTFP (99 aa)) is disordered. Over residues 21 to 44 (EALGLVGAQAPATEEQEAASSSST) the composition is skewed to low complexity. Polar residues predominate over residues 65 to 87 (PQGASSLPTTMNYPLWSQSYEDS). In terms of domain architecture, MAGE spans 109–308 (LSRKVAKLVH…ISYPLLHEWA (200 aa)).

As to quaternary structure, interacts with TRIM28. Post-translationally, ubiquitinated by the DCX(DCAF12) complex specifically recognizes the diglutamate (Glu-Glu) at the C-terminus, leading to its degradation. Expressed in many tumors of several types, such as melanoma, head and neck squamous cell carcinoma, lung carcinoma and breast carcinoma, but not in normal tissues except for testes.

Activator of ubiquitin ligase activity of RING-type zinc finger-containing E3 ubiquitin-protein ligases that acts as a repressor of autophagy. May enhance ubiquitin ligase activity of TRIM28 and stimulate p53/TP53 ubiquitination by TRIM28. Proposed to act through recruitment and/or stabilization of the Ubl-conjugating enzyme (E2) at the E3:substrate complex. May play a role in tumor transformation or aspects of tumor progression. In vitro promotes cell viability in melanoma cell lines. This is Melanoma-associated antigen 6 from Homo sapiens (Human).